A 338-amino-acid chain; its full sequence is UDP-glucose 4-epimerase (338 aa).

NAD(+) contacts are provided by residues 11–12 (YI), 31–36 (DNLCNS), 58–59 (DI), 80–84 (FAGLK), N99, S124, Y149, K153, and F178. Substrate is bound by residues S124 and Y149. Y149 acts as the Proton acceptor in catalysis. Residues N179, 199–200 (NL), 216–218 (SVF), R231, and 292–295 (RPGD) contribute to the substrate site.

The protein belongs to the NAD(P)-dependent epimerase/dehydratase family. Homodimer. The cofactor is NAD(+).

It catalyses the reaction UDP-alpha-D-glucose = UDP-alpha-D-galactose. The protein operates within carbohydrate metabolism; galactose metabolism. Functionally, involved in the metabolism of galactose. Catalyzes the conversion of UDP-galactose (UDP-Gal) to UDP-glucose (UDP-Glc) through a mechanism involving the transient reduction of NAD. The polypeptide is UDP-glucose 4-epimerase (galE) (Pasteurella multocida (strain Pm70)).